Reading from the N-terminus, the 239-residue chain is NAD(P)H-quinone oxidoreductase subunit K, chloroplastic (239 aa).

[4Fe-4S] cluster-binding residues include cysteine 43, cysteine 44, cysteine 108, and cysteine 139. Residues 217 to 239 are disordered; the sequence is KSSVSSRELGNESGKEDVSIQNK. Basic and acidic residues predominate over residues 225–239; that stretch reads LGNESGKEDVSIQNK.

The protein belongs to the complex I 20 kDa subunit family. In terms of assembly, NDH is composed of at least 16 different subunits, 5 of which are encoded in the nucleus. [4Fe-4S] cluster is required as a cofactor.

The protein resides in the plastid. The protein localises to the chloroplast thylakoid membrane. The catalysed reaction is a plastoquinone + NADH + (n+1) H(+)(in) = a plastoquinol + NAD(+) + n H(+)(out). It carries out the reaction a plastoquinone + NADPH + (n+1) H(+)(in) = a plastoquinol + NADP(+) + n H(+)(out). Its function is as follows. NDH shuttles electrons from NAD(P)H:plastoquinone, via FMN and iron-sulfur (Fe-S) centers, to quinones in the photosynthetic chain and possibly in a chloroplast respiratory chain. The immediate electron acceptor for the enzyme in this species is believed to be plastoquinone. Couples the redox reaction to proton translocation, and thus conserves the redox energy in a proton gradient. This chain is NAD(P)H-quinone oxidoreductase subunit K, chloroplastic, found in Acorus calamus var. americanus (American sweet flag).